The following is a 184-amino-acid chain: GMP synthase [glutamine-hydrolyzing] subunit A (184 aa).

Residues 3–184 (RIVVVDNHGQ…ENFRDICAGD (182 aa)) enclose the Glutamine amidotransferase type-1 domain. The active-site Nucleophile is Cys-73. Catalysis depends on residues His-161 and Glu-163.

In terms of assembly, heterodimer composed of a glutamine amidotransferase subunit (A) and a GMP-binding subunit (B).

The catalysed reaction is XMP + L-glutamine + ATP + H2O = GMP + L-glutamate + AMP + diphosphate + 2 H(+). It functions in the pathway purine metabolism; GMP biosynthesis; GMP from XMP (L-Gln route): step 1/1. Catalyzes the synthesis of GMP from XMP. This chain is GMP synthase [glutamine-hydrolyzing] subunit A, found in Natronomonas pharaonis (strain ATCC 35678 / DSM 2160 / CIP 103997 / JCM 8858 / NBRC 14720 / NCIMB 2260 / Gabara) (Halobacterium pharaonis).